Consider the following 132-residue polypeptide: Ragulator complex protein LAMTOR3 homolog (132 aa).

It belongs to the LAMTOR3 family. Part of the Ragulator complex.

Regulator of the TOR pathway, a signaling cascade that promotes cell growth in response to growth factors, energy levels, and amino acids. May activate the TOR signaling cascade in response to amino acids. This Dictyostelium discoideum (Social amoeba) protein is Ragulator complex protein LAMTOR3 homolog.